Here is a 130-residue protein sequence, read N- to C-terminus: uncharacterized protein (130 aa).

Polar residues-rich tracts occupy residues Met1–Gln27 and Gln36–Gly46. Disordered stretches follow at residues Met1–Gly46 and Val103–Leu130. The stretch at Gln27 to Ile51 forms a coiled coil.

It belongs to the PDCD5 family.

This is an uncharacterized protein from Caenorhabditis elegans.